A 285-amino-acid chain; its full sequence is Transmembrane protein 53-A (285 aa).

Residues 165–185 (FLALAAFAILVIILRILLYPL) form a helical membrane-spanning segment.

This sequence belongs to the TMEM53 family.

The protein resides in the nucleus outer membrane. Ensures normal bone formation, through the negative regulation of bone morphogenetic protein (BMP) signaling in osteoblast lineage cells by blocking cytoplasm-nucleus translocation of phosphorylated SMAD proteins. The polypeptide is Transmembrane protein 53-A (tmem53-a) (Xenopus laevis (African clawed frog)).